The chain runs to 141 residues: Hemoglobin subunit alpha (141 aa).

Positions 1–141 (VLSPEDKNHV…VSTVLTSKYR (141 aa)) constitute a Globin domain. A Phosphoserine modification is found at serine 3. Lysine 7 is subject to N6-succinyllysine. Position 16 is an N6-acetyllysine; alternate (lysine 16). At lysine 16 the chain carries N6-succinyllysine; alternate. Tyrosine 24 is subject to Phosphotyrosine. Residue serine 35 is modified to Phosphoserine. N6-succinyllysine is present on lysine 40. The residue at position 49 (serine 49) is a Phosphoserine. An O2-binding site is contributed by histidine 58. Histidine 87 lines the heme b pocket. Serine 102 is modified (phosphoserine). The residue at position 108 (threonine 108) is a Phosphothreonine. 2 positions are modified to phosphoserine: serine 124 and serine 131. Residues threonine 134 and threonine 137 each carry the phosphothreonine modification. Serine 138 is modified (phosphoserine).

This sequence belongs to the globin family. Heterotetramer of two alpha chains and two beta chains. In terms of tissue distribution, red blood cells.

Functionally, involved in oxygen transport from the lung to the various peripheral tissues. Hemopressin acts as an antagonist peptide of the cannabinoid receptor CNR1. Hemopressin-binding efficiently blocks cannabinoid receptor CNR1 and subsequent signaling. The chain is Hemoglobin subunit alpha (HBA) from Spalax ehrenbergi (Middle East blind mole rat).